The sequence spans 102 residues: Large ribosomal subunit protein bL21 (102 aa).

This sequence belongs to the bacterial ribosomal protein bL21 family. In terms of assembly, part of the 50S ribosomal subunit. Contacts protein L20.

This protein binds to 23S rRNA in the presence of protein L20. This Bifidobacterium longum subsp. infantis (strain ATCC 15697 / DSM 20088 / JCM 1222 / NCTC 11817 / S12) protein is Large ribosomal subunit protein bL21.